We begin with the raw amino-acid sequence, 647 residues long: Leucine aminopeptidase 2 (647 aa).

Residues 169–171 and 295–300 contribute to the substrate site; these read QCQ and PYGGME. Position 324 (H324) interacts with Zn(2+). The active-site Proton acceptor is E325. H328 and E347 together coordinate Zn(2+). Catalysis depends on Y418, which acts as the Proton donor.

Belongs to the peptidase M1 family. Zn(2+) serves as cofactor.

It localises to the cytoplasm. The protein localises to the nucleus. The catalysed reaction is an epoxide + H2O = an ethanediol. Its function is as follows. Aminopeptidase that preferentially cleaves di- and tripeptides. Also has low epoxide hydrolase activity (in vitro). Can hydrolyze the epoxide leukotriene LTA(4) but it forms preferentially 5,6-dihydroxy-7,9,11,14-eicosatetraenoic acid rather than the cytokine leukotriene B(4) as the product compared to the homologous mammalian enzyme (in vitro). The polypeptide is Leucine aminopeptidase 2 (Yarrowia lipolytica (strain CLIB 122 / E 150) (Yeast)).